We begin with the raw amino-acid sequence, 503 residues long: Lysine--tRNA ligase (503 aa).

Mg(2+) contacts are provided by Glu414 and Glu421.

Belongs to the class-II aminoacyl-tRNA synthetase family. Homodimer. Mg(2+) is required as a cofactor.

The protein resides in the cytoplasm. The enzyme catalyses tRNA(Lys) + L-lysine + ATP = L-lysyl-tRNA(Lys) + AMP + diphosphate. The protein is Lysine--tRNA ligase of Neisseria gonorrhoeae (strain ATCC 700825 / FA 1090).